The primary structure comprises 547 residues: Nuclear speckle splicing regulatory protein 1 (547 aa).

The segment at 25 to 51 (KPSVFGNDSDDDEASVSESLQREAAKK) is disordered. Ser-27 and Ser-33 each carry phosphoserine. A coiled-coil region spans residues 103 to 177 (IHNLLKAVEI…EARLDVTKQK (75 aa)). The interval 105-169 (NLLKAVEIRK…REKRAAALEA (65 aa)) is necessary for alternative splicing activity. A disordered region spans residues 188-523 (NQAVGEEAVP…KRSNEETVMS (336 aa)). Glycyl lysine isopeptide (Lys-Gly) (interchain with G-Cter in SUMO2) cross-links involve residues Lys-198 and Lys-209. Positions 200–217 (SFREARTVIKEEKLRGYP) are enriched in basic and acidic residues. Residues 223–232 (ENRPQQNCAL) show a composition bias toward polar residues. A compositionally biased stretch (acidic residues) spans 237–254 (EEAEENPDADSDSEESCD). Ser-247 and Ser-252 each carry phosphoserine. Positions 255–269 (DGERGDHKVKSRGEE) are enriched in basic and acidic residues. Lys-276 carries the post-translational modification N6-acetyllysine. Positions 277-287 (YLKHHKNHTHS) are enriched in basic residues. Lys-279 is covalently cross-linked (Glycyl lysine isopeptide (Lys-Gly) (interchain with G-Cter in SUMO2)). Over residues 308-339 (RGHEHKGGQHQDRQSRDQESCHKDRSHREEKS) the composition is skewed to basic and acidic residues. The segment covering 340–355 (SHRHREASHKDHHWKR) has biased composition (basic residues). Composition is skewed to basic and acidic residues over residues 356-480 (HEHE…KPPR) and 490-506 (RLTE…ERPP). Positions 376–417 (KREKYSSREQEKDRQWNDHDRYSEKEKKGKEKEEHRKARRER) form a coiled coil. Residue Ser-447 is modified to Phosphoserine.

Belongs to the NSRP1 family. As to quaternary structure, interacts (via C-terminus) with SRSF1. Interacts (via C-terminus) with SRSF2.

It localises to the nucleus. The protein resides in the nucleus speckle. Functionally, RNA-binding protein that mediates pre-mRNA alternative splicing regulation. The sequence is that of Nuclear speckle splicing regulatory protein 1 (Nsrp1) from Rattus norvegicus (Rat).